A 283-amino-acid chain; its full sequence is Phosphatidylserine decarboxylase proenzyme (283 aa).

Active-site charge relay system; for autoendoproteolytic cleavage activity residues include D90, H143, and S248. The Schiff-base intermediate with substrate; via pyruvic acid; for decarboxylase activity role is filled by S248. S248 carries the pyruvic acid (Ser); by autocatalysis modification.

The protein belongs to the phosphatidylserine decarboxylase family. PSD-B subfamily. Prokaryotic type I sub-subfamily. Heterodimer of a large membrane-associated beta subunit and a small pyruvoyl-containing alpha subunit. Pyruvate serves as cofactor. Post-translationally, is synthesized initially as an inactive proenzyme. Formation of the active enzyme involves a self-maturation process in which the active site pyruvoyl group is generated from an internal serine residue via an autocatalytic post-translational modification. Two non-identical subunits are generated from the proenzyme in this reaction, and the pyruvate is formed at the N-terminus of the alpha chain, which is derived from the carboxyl end of the proenzyme. The autoendoproteolytic cleavage occurs by a canonical serine protease mechanism, in which the side chain hydroxyl group of the serine supplies its oxygen atom to form the C-terminus of the beta chain, while the remainder of the serine residue undergoes an oxidative deamination to produce ammonia and the pyruvoyl prosthetic group on the alpha chain. During this reaction, the Ser that is part of the protease active site of the proenzyme becomes the pyruvoyl prosthetic group, which constitutes an essential element of the active site of the mature decarboxylase.

The protein resides in the cell membrane. The catalysed reaction is a 1,2-diacyl-sn-glycero-3-phospho-L-serine + H(+) = a 1,2-diacyl-sn-glycero-3-phosphoethanolamine + CO2. It functions in the pathway phospholipid metabolism; phosphatidylethanolamine biosynthesis; phosphatidylethanolamine from CDP-diacylglycerol: step 2/2. Catalyzes the formation of phosphatidylethanolamine (PtdEtn) from phosphatidylserine (PtdSer). The polypeptide is Phosphatidylserine decarboxylase proenzyme (Francisella tularensis subsp. novicida (strain U112)).